We begin with the raw amino-acid sequence, 537 residues long: Carbamoyl phosphate synthase large chain, C-terminal section (537 aa).

The tract at residues 1–395 is carbamoyl phosphate synthetic domain; it reads MSKKVVILGS…AYYKAQLSAG (395 aa). One can recognise an ATP-grasp domain in the interval 122–313; sequence RELIIELGLK…LAKIATKVAI (192 aa). The ATP site is built by Arg-158, Lys-197, Leu-199, Glu-204, Gly-229, Val-230, His-231, Ser-232, Gln-272, and Glu-284. The Mg(2+) site is built by Gln-272, Glu-284, and Asn-286. Mn(2+)-binding residues include Gln-272, Glu-284, and Asn-286. In terms of domain architecture, MGS-like spans 396-537; the sequence is YRLPEKGNLF…VHSLQEIYNI (142 aa). Residues 396–537 form an allosteric domain region; it reads YRLPEKGNLF…VHSLQEIYNI (142 aa).

Belongs to the CarB family. Composed of two chains; the small (or glutamine) chain promotes the hydrolysis of glutamine to ammonia, which is used by the large (or ammonia) chain to synthesize carbamoyl phosphate. Tetramer of heterodimers (alpha,beta)4. Mg(2+) is required as a cofactor. The cofactor is Mn(2+).

The catalysed reaction is hydrogencarbonate + L-glutamine + 2 ATP + H2O = carbamoyl phosphate + L-glutamate + 2 ADP + phosphate + 2 H(+). The enzyme catalyses hydrogencarbonate + NH4(+) + 2 ATP = carbamoyl phosphate + 2 ADP + phosphate + 2 H(+). The protein operates within amino-acid biosynthesis; L-arginine biosynthesis; carbamoyl phosphate from bicarbonate: step 1/1. It participates in pyrimidine metabolism; UMP biosynthesis via de novo pathway; (S)-dihydroorotate from bicarbonate: step 1/3. In terms of biological role, large subunit of the glutamine-dependent carbamoyl phosphate synthetase (CPSase). CPSase catalyzes the formation of carbamoyl phosphate from the ammonia moiety of glutamine, carbonate, and phosphate donated by ATP, constituting the first step of 2 biosynthetic pathways, one leading to arginine and/or urea and the other to pyrimidine nucleotides. The large subunit (synthetase) binds the substrates ammonia (free or transferred from glutamine from the small subunit), hydrogencarbonate and ATP and carries out an ATP-coupled ligase reaction, activating hydrogencarbonate by forming carboxy phosphate which reacts with ammonia to form carbamoyl phosphate. In Aquifex aeolicus (strain VF5), this protein is Carbamoyl phosphate synthase large chain, C-terminal section (carB2).